Consider the following 460-residue polypeptide: tRNA modification GTPase MnmE (460 aa).

R29, E89, and R128 together coordinate (6S)-5-formyl-5,6,7,8-tetrahydrofolate. The region spanning 224–382 (GVPTVIIGKP…LKQNLLEIIQ (159 aa)) is the TrmE-type G domain. A K(+)-binding site is contributed by N234. GTP-binding positions include 234-239 (NAGKST), 253-259 (SEIAGTT), and 278-281 (DTAG). Mg(2+) is bound at residue S238. K(+) is bound by residues S253, I255, and T258. T259 is a Mg(2+) binding site. K460 provides a ligand contact to (6S)-5-formyl-5,6,7,8-tetrahydrofolate.

This sequence belongs to the TRAFAC class TrmE-Era-EngA-EngB-Septin-like GTPase superfamily. TrmE GTPase family. As to quaternary structure, homodimer. Heterotetramer of two MnmE and two MnmG subunits. K(+) serves as cofactor.

The protein localises to the cytoplasm. In terms of biological role, exhibits a very high intrinsic GTPase hydrolysis rate. Involved in the addition of a carboxymethylaminomethyl (cmnm) group at the wobble position (U34) of certain tRNAs, forming tRNA-cmnm(5)s(2)U34. This Cytophaga hutchinsonii (strain ATCC 33406 / DSM 1761 / CIP 103989 / NBRC 15051 / NCIMB 9469 / D465) protein is tRNA modification GTPase MnmE.